A 765-amino-acid polypeptide reads, in one-letter code: Probable glycosyltransferase STELLO2 (765 aa).

At 1–43 (MLVQDRVAPKPPKSRIRELPSRDRFAEPKILDFSSWVSDNVYR) the chain is on the cytoplasmic side. Residues 44-64 (IVIIFLFIVTVAAFFFLYNTT) traverse the membrane as a helical segment. Over 65 to 765 (DTASLLCFQS…EGDPLLMELV (701 aa)) the chain is Lumenal. 2 N-linked (GlcNAc...) asparagine glycosylation sites follow: N235 and N723.

The protein belongs to the STELLO family. In terms of assembly, homo- and heterodimer with STL1. Interacts with CESA1, CESA3, CESA4, CESA6, CESA7 and CESA8, but not with GOT1. Expressed in cells that are expanding or producing secondary cell walls.

The protein localises to the golgi apparatus membrane. Its function is as follows. Probable glycosyltransferase regulating the assembly and trafficking of cellulose synthase complexes. The sequence is that of Probable glycosyltransferase STELLO2 from Arabidopsis thaliana (Mouse-ear cress).